Here is a 305-residue protein sequence, read N- to C-terminus: Protoheme IX farnesyltransferase 1 (305 aa).

A run of 8 helical transmembrane segments spans residues 22 to 42, 53 to 73, 94 to 114, 115 to 135, 154 to 174, 179 to 199, 230 to 250, and 283 to 303; these read IKTGIIKSNLVPMFAGLTLAL, IPEILFAFIGSILIIGAAGAF, VTGDISPKTALWLGIFMTIFG, LVFLALTTYLAAILGFIGLFL, IGSVSGAMPPLIGWAAIYPDV, IIGLFIIMIIWQMPHFYAIAI, LVILIIISILLGSLSIGLMLV, and LFHMTILFSTVIIYSLVGIFF.

This sequence belongs to the UbiA prenyltransferase family. Protoheme IX farnesyltransferase subfamily. As to quaternary structure, interacts with CtaA.

The protein resides in the cell membrane. The catalysed reaction is heme b + (2E,6E)-farnesyl diphosphate + H2O = Fe(II)-heme o + diphosphate. The protein operates within porphyrin-containing compound metabolism; heme O biosynthesis; heme O from protoheme: step 1/1. In terms of biological role, converts heme B (protoheme IX) to heme O by substitution of the vinyl group on carbon 2 of heme B porphyrin ring with a hydroxyethyl farnesyl side group. In Bacillus cytotoxicus (strain DSM 22905 / CIP 110041 / 391-98 / NVH 391-98), this protein is Protoheme IX farnesyltransferase 1.